Reading from the N-terminus, the 401-residue chain is Argininosuccinate synthase (401 aa).

Residues 10–18 (AYSGGVDTS) and Ala-38 each bind ATP. An L-citrulline-binding site is contributed by Tyr-89. Residue Gly-119 coordinates ATP. L-aspartate is bound by residues Thr-121, Asn-125, and Asp-126. Residue Asn-125 participates in L-citrulline binding. Residues Arg-129, Ser-177, Ser-186, Glu-262, and Tyr-274 each coordinate L-citrulline.

It belongs to the argininosuccinate synthase family. Type 1 subfamily. In terms of assembly, homotetramer.

It is found in the cytoplasm. It catalyses the reaction L-citrulline + L-aspartate + ATP = 2-(N(omega)-L-arginino)succinate + AMP + diphosphate + H(+). The protein operates within amino-acid biosynthesis; L-arginine biosynthesis; L-arginine from L-ornithine and carbamoyl phosphate: step 2/3. The chain is Argininosuccinate synthase from Synechococcus sp. (strain WH7803).